A 102-amino-acid polypeptide reads, in one-letter code: Small ribosomal subunit protein uS10 (102 aa).

The protein belongs to the universal ribosomal protein uS10 family. In terms of assembly, part of the 30S ribosomal subunit.

Its function is as follows. Involved in the binding of tRNA to the ribosomes. The protein is Small ribosomal subunit protein uS10 of Brucella abortus (strain S19).